The primary structure comprises 365 residues: Chorismate synthase (365 aa).

The segment covering 41-51 (IQKELDRRRPG) has biased composition (basic and acidic residues). The disordered stretch occupies residues 41–62 (IQKELDRRRPGQSEVSTPRSEA). Residue Arg-48 participates in NADP(+) binding. FMN is bound by residues 125-127 (RSS), Gly-285, 300-304 (KPTPS), and Arg-327.

It belongs to the chorismate synthase family. The cofactor is FMNH2.

It catalyses the reaction 5-O-(1-carboxyvinyl)-3-phosphoshikimate = chorismate + phosphate. The protein operates within metabolic intermediate biosynthesis; chorismate biosynthesis; chorismate from D-erythrose 4-phosphate and phosphoenolpyruvate: step 7/7. In terms of biological role, catalyzes the anti-1,4-elimination of the C-3 phosphate and the C-6 proR hydrogen from 5-enolpyruvylshikimate-3-phosphate (EPSP) to yield chorismate, which is the branch point compound that serves as the starting substrate for the three terminal pathways of aromatic amino acid biosynthesis. This reaction introduces a second double bond into the aromatic ring system. This is Chorismate synthase from Methanosarcina acetivorans (strain ATCC 35395 / DSM 2834 / JCM 12185 / C2A).